Reading from the N-terminus, the 59-residue chain is uncharacterized protein (59 aa).

Residues 6 to 26 (WWLVVFAVFVFLFDTLLMQWI) traverse the membrane as a helical segment.

The protein resides in the membrane. This is an uncharacterized protein from Escherichia coli O157:H7.